Here is a 196-residue protein sequence, read N- to C-terminus: Ribosomal RNA large subunit methyltransferase E (196 aa).

Residues glycine 50, tryptophan 52, aspartate 70, aspartate 87, and aspartate 112 each coordinate S-adenosyl-L-methionine. Lysine 152 functions as the Proton acceptor in the catalytic mechanism.

This sequence belongs to the class I-like SAM-binding methyltransferase superfamily. RNA methyltransferase RlmE family.

It localises to the cytoplasm. It carries out the reaction uridine(2552) in 23S rRNA + S-adenosyl-L-methionine = 2'-O-methyluridine(2552) in 23S rRNA + S-adenosyl-L-homocysteine + H(+). Specifically methylates the uridine in position 2552 of 23S rRNA at the 2'-O position of the ribose in the fully assembled 50S ribosomal subunit. In Bdellovibrio bacteriovorus (strain ATCC 15356 / DSM 50701 / NCIMB 9529 / HD100), this protein is Ribosomal RNA large subunit methyltransferase E.